The primary structure comprises 544 residues: Probable protein kinase UbiB (544 aa).

A Protein kinase domain is found at 123 to 501 (DFDIKPLASA…KRQQAKGQFL (379 aa)). ATP-binding positions include 129–137 (LASASIAQV) and Lys-152. The Proton acceptor role is filled by Asp-287. A helical transmembrane segment spans residues 515–537 (LLTSNITVLASISAATGAAFWLF).

This sequence belongs to the ABC1 family. UbiB subfamily.

The protein resides in the cell inner membrane. It functions in the pathway cofactor biosynthesis; ubiquinone biosynthesis [regulation]. Functionally, is probably a protein kinase regulator of UbiI activity which is involved in aerobic coenzyme Q (ubiquinone) biosynthesis. In Aliivibrio fischeri (strain MJ11) (Vibrio fischeri), this protein is Probable protein kinase UbiB.